Here is a 242-residue protein sequence, read N- to C-terminus: Probable proteasome subunit alpha type-7 (242 aa).

It belongs to the peptidase T1A family. As to quaternary structure, the 26S proteasome consists of a 20S proteasome core and two 19S regulatory subunits. The 20S proteasome core is composed of 28 subunits that are arranged in four stacked rings, resulting in a barrel-shaped structure. The two end rings are each formed by seven alpha subunits, and the two central rings are each formed by seven beta subunits. The catalytic chamber with the active sites is on the inside of the barrel.

The protein localises to the cytoplasm. Its subcellular location is the nucleus. Functionally, the proteasome degrades poly-ubiquitinated proteins in the cytoplasm and in the nucleus. It is essential for the regulated turnover of proteins and for the removal of misfolded proteins. The proteasome is a multicatalytic proteinase complex that is characterized by its ability to cleave peptides with Arg, Phe, Tyr, Leu, and Glu adjacent to the leaving group at neutral or slightly basic pH. It has an ATP-dependent proteolytic activity. The sequence is that of Probable proteasome subunit alpha type-7 (PRE10) from Encephalitozoon cuniculi (strain GB-M1) (Microsporidian parasite).